The following is a 712-amino-acid chain: Polyribonucleotide nucleotidyltransferase (712 aa).

2 residues coordinate Mg(2+): Asp-493 and Asp-499. The 63-residue stretch at 560-622 folds into the KH domain; that stretch reads PRLTKLTIDP…RDAEAAIERI (63 aa). Residues 632–700 enclose the S1 motif domain; the sequence is GEDYVGTVKG…DDGKMRLTRK (69 aa).

It belongs to the polyribonucleotide nucleotidyltransferase family. Requires Mg(2+) as cofactor.

It localises to the cytoplasm. The enzyme catalyses RNA(n+1) + phosphate = RNA(n) + a ribonucleoside 5'-diphosphate. Functionally, involved in mRNA degradation. Catalyzes the phosphorolysis of single-stranded polyribonucleotides processively in the 3'- to 5'-direction. The protein is Polyribonucleotide nucleotidyltransferase of Salinibacter ruber (strain DSM 13855 / M31).